Reading from the N-terminus, the 310-residue chain is Tryptophan 2,3-dioxygenase (310 aa).

Positions 1–36 (MQPPGEDAPAGCPFSGARAAHSAPAAPAAHEASHVP) are disordered. Low complexity predominate over residues 15–36 (SGARAAHSAPAAPAAHEASHVP). Substrate is bound by residues 79 to 83 (FIIQH), Y141, and R145. Residue H268 participates in heme binding. T282 lines the substrate pocket.

This sequence belongs to the tryptophan 2,3-dioxygenase family. Homotetramer. The cofactor is heme.

The enzyme catalyses L-tryptophan + O2 = N-formyl-L-kynurenine. It participates in amino-acid degradation; L-tryptophan degradation via kynurenine pathway; L-kynurenine from L-tryptophan: step 1/2. Its function is as follows. Heme-dependent dioxygenase that catalyzes the oxidative cleavage of the L-tryptophan (L-Trp) pyrrole ring and converts L-tryptophan to N-formyl-L-kynurenine. Catalyzes the oxidative cleavage of the indole moiety. The polypeptide is Tryptophan 2,3-dioxygenase (Burkholderia lata (strain ATCC 17760 / DSM 23089 / LMG 22485 / NCIMB 9086 / R18194 / 383)).